The primary structure comprises 256 residues: Alcohol dehydrogenase (256 aa).

Residue 12–35 (FVAGLGGIGLDTSKELLKRDLKNL) participates in NAD(+) binding. Ser140 lines the substrate pocket. Catalysis depends on Tyr153, which acts as the Proton acceptor.

Belongs to the short-chain dehydrogenases/reductases (SDR) family. Homodimer.

It carries out the reaction a primary alcohol + NAD(+) = an aldehyde + NADH + H(+). The enzyme catalyses a secondary alcohol + NAD(+) = a ketone + NADH + H(+). The polypeptide is Alcohol dehydrogenase (Adh) (Drosophila sechellia (Fruit fly)).